The sequence spans 244 residues: uncharacterized protein (244 aa).

Helical transmembrane passes span 22-42 (IMLQFVAILFIVQSASALLSF), 63-83 (FIFSVAITQILTSFIAAWGLT), 110-130 (VILLDLLMVAPMLLGLGEAFA), 140-160 (IMSLIAMLVGVWFFVRLNLTV), 186-206 (GVLFIYTLLVYFLVPILIFQL), and 213-233 (AVFDMVIGIFTALLNIFMLVV).

It is found in the cell membrane. This is an uncharacterized protein from Haemophilus influenzae (strain ATCC 51907 / DSM 11121 / KW20 / Rd).